The sequence spans 319 residues: Pantothenate kinase (319 aa).

96-103 serves as a coordination point for ATP; that stretch reads GSVAVGKS.

This sequence belongs to the prokaryotic pantothenate kinase family.

It localises to the cytoplasm. It catalyses the reaction (R)-pantothenate + ATP = (R)-4'-phosphopantothenate + ADP + H(+). The protein operates within cofactor biosynthesis; coenzyme A biosynthesis; CoA from (R)-pantothenate: step 1/5. This Bacillus subtilis (strain 168) protein is Pantothenate kinase (coaA).